We begin with the raw amino-acid sequence, 895 residues long: Catenin alpha-3 (895 aa).

A coiled-coil region spans residues 74–107; that stretch reads EMIAKEATVLKEELAAALQEVRKESKALKVSAER. Ser160 carries the post-translational modification Phosphoserine. Residues 325–379 adopt a coiled-coil conformation; the sequence is RERIIAECNAIRQALQDLLTEYMSNTGKTERSNTLNTAIVNMSKKTRDLRRQLRK. Thr361 carries the phosphothreonine modification. Positions 635-660 are disordered; it reads DVSDLEDDHEVRSHTSIQTEGKTDRA. Residues Ser637 and Ser647 each carry the phosphoserine modification. Thr649 carries the post-translational modification Phosphothreonine.

It belongs to the vinculin/alpha-catenin family. In terms of assembly, interacts with CTNNB1. Interacts with PKP2. In terms of tissue distribution, expressed in heart (at protein level).

It localises to the cytoplasm. The protein localises to the cytoskeleton. The protein resides in the cell junction. It is found in the desmosome. May be involved in formation of stretch-resistant cell-cell adhesion complexes. This is Catenin alpha-3 from Mus musculus (Mouse).